A 321-amino-acid chain; its full sequence is Lipoyl synthase (321 aa).

Residues Cys68, Cys73, Cys79, Cys94, Cys98, Cys101, and Ser308 each contribute to the [4Fe-4S] cluster site. The Radical SAM core domain occupies 80–297 (FNHGTATFMI…KEIALELGFT (218 aa)).

Belongs to the radical SAM superfamily. Lipoyl synthase family. It depends on [4Fe-4S] cluster as a cofactor.

It is found in the cytoplasm. It carries out the reaction [[Fe-S] cluster scaffold protein carrying a second [4Fe-4S](2+) cluster] + N(6)-octanoyl-L-lysyl-[protein] + 2 oxidized [2Fe-2S]-[ferredoxin] + 2 S-adenosyl-L-methionine + 4 H(+) = [[Fe-S] cluster scaffold protein] + N(6)-[(R)-dihydrolipoyl]-L-lysyl-[protein] + 4 Fe(3+) + 2 hydrogen sulfide + 2 5'-deoxyadenosine + 2 L-methionine + 2 reduced [2Fe-2S]-[ferredoxin]. Its pathway is protein modification; protein lipoylation via endogenous pathway; protein N(6)-(lipoyl)lysine from octanoyl-[acyl-carrier-protein]: step 2/2. Functionally, catalyzes the radical-mediated insertion of two sulfur atoms into the C-6 and C-8 positions of the octanoyl moiety bound to the lipoyl domains of lipoate-dependent enzymes, thereby converting the octanoylated domains into lipoylated derivatives. This Aliivibrio fischeri (strain ATCC 700601 / ES114) (Vibrio fischeri) protein is Lipoyl synthase.